The chain runs to 537 residues: Membrane protein insertase YidC (537 aa).

Helical transmembrane passes span 6–26, 341–363, 411–431, 449–469, and 490–510; these read SLLALALLFISFLVYQQWEID, LVSNWGLAIIGVTLVVKAILYPL, LGGCLPLLIQMPIFIALYWTF, LSAQDPYYILPLLMGGSMFLL, and PVIFTVFFLWFPAGLVLYWLV.

It belongs to the OXA1/ALB3/YidC family. Type 1 subfamily. As to quaternary structure, interacts with the Sec translocase complex via SecD. Specifically interacts with transmembrane segments of nascent integral membrane proteins during membrane integration.

The protein resides in the cell inner membrane. Its function is as follows. Required for the insertion and/or proper folding and/or complex formation of integral membrane proteins into the membrane. Involved in integration of membrane proteins that insert both dependently and independently of the Sec translocase complex, as well as at least some lipoproteins. Aids folding of multispanning membrane proteins. In Actinobacillus succinogenes (strain ATCC 55618 / DSM 22257 / CCUG 43843 / 130Z), this protein is Membrane protein insertase YidC.